A 160-amino-acid chain; its full sequence is Cytochrome b6-f complex subunit 4 (160 aa).

3 consecutive transmembrane segments (helical) span residues Leu36 to Val56, Leu95 to Glu115, and Thr131 to Ile151.

It belongs to the cytochrome b family. PetD subfamily. The 4 large subunits of the cytochrome b6-f complex are cytochrome b6, subunit IV (17 kDa polypeptide, petD), cytochrome f and the Rieske protein, while the 4 small subunits are petG, petL, petM and petN. The complex functions as a dimer.

It localises to the plastid. The protein resides in the chloroplast thylakoid membrane. Its function is as follows. Component of the cytochrome b6-f complex, which mediates electron transfer between photosystem II (PSII) and photosystem I (PSI), cyclic electron flow around PSI, and state transitions. This Chaetosphaeridium globosum (Charophycean green alga) protein is Cytochrome b6-f complex subunit 4.